We begin with the raw amino-acid sequence, 231 residues long: CLAVATA3/ESR (CLE)-related protein 4B-1 (231 aa).

A signal peptide spans 1-21; sequence MATNTMLCLLILSVVLALAFA. The segment at 21-83 is required for secretion from the host cytoplasm to the host apoplasm; the sequence is ATNKKGDEEP…SNLLPNNNWM (63 aa). Asparagine 32 is a glycosylation site (N-linked (GlcNAc...) asparagine). Residues 116 to 231 are disordered; it reads RKTGMHSQRH…APAGPDPIHH (116 aa). Composition is skewed to basic and acidic residues over residues 125 to 137 and 144 to 221; these read HHEETTLEQEKRV and PIHH…EKRG. One copy of the A-1 repeat lies at 127–135; that stretch reads EETTLEQEK. The tract at residues 127 to 219 is 5 X approximate repeat A; it reads EETTLEQEKR…HEETTFEQEK (93 aa). The CLE-1 repeat unit spans residues 136 to 147; it reads RVAGAGPDPIHH. The 5 X approximate repeat CLE stretch occupies residues 136–231; that stretch reads RVAGAGPDPI…APAGPDPIHH (96 aa). Residues 148–156 form an A-2 repeat; sequence QDTTLEQEK. The CLE-2 repeat unit spans residues 157 to 168; it reads RAVPAGPDPKHH. The stretch at 169-177 is one A-3 repeat; sequence EETTLEQEK. One copy of the CLE-3 repeat lies at 178-189; the sequence is RAVPAGPDPKHH. Residues 190–198 form an A-4 repeat; it reads EETTLEQEK. One copy of the CLE-4 repeat lies at 199-210; sequence RAVPAGPDPKHH. An A-5 repeat occupies 211–219; sequence EETTFEQEK. A CLE-5 repeat occupies 220–231; it reads RGAPAGPDPIHH.

Belongs to the CLV3/ESR signal peptide family. As to expression, highly expressed exclusively within the dorsal esophageal gland cell during syncytium formation in host plants.

It localises to the secreted. The protein localises to the host cytoplasm. The protein resides in the host extracellular space. Its subcellular location is the extracellular space. It is found in the apoplast. Mimics host plant CLE extracellular signal peptides that regulate cell fate. May play a role in the differentiation or division of feeding cells (syncytia) induced in plant roots during infection. The sequence is that of CLAVATA3/ESR (CLE)-related protein 4B-1 (CLE-4B-1) from Globodera rostochiensis (Golden nematode worm).